The following is an 86-amino-acid chain: uncharacterized protein (86 aa).

This sequence to M.jannaschii MJ0526.1.

This is an uncharacterized protein from Methanothermobacter thermautotrophicus (strain ATCC 29096 / DSM 1053 / JCM 10044 / NBRC 100330 / Delta H) (Methanobacterium thermoautotrophicum).